We begin with the raw amino-acid sequence, 479 residues long: Zinc metalloproteinase/disintegrin PMMP-1 (479 aa).

Residues 1-20 form the signal peptide; it reads MIQVLLVTICLAVFPYQGSS. The propeptide occupies 21–188; the sequence is IILESGNVND…PIKKASKLVV (168 aa). Residues 194–390 form the Peptidase M12B domain; the sequence is RYVELVIVAD…HNPQCILNKP (197 aa). 3 cysteine pairs are disulfide-bonded: Cys-305–Cys-385, Cys-345–Cys-369, and Cys-347–Cys-352. His-330 is a Zn(2+) binding site. Residue Glu-331 is part of the active site. Zn(2+) is bound by residues His-334 and His-339. Asn-368 carries an N-linked (GlcNAc...) asparagine glycan. A propeptide spanning residues 391-408 is cleaved from the precursor; it reads LRTDTVSTPVSGNELLEA. Residues 398 to 479 form the Disintegrin domain; sequence TPVSGNELLE…ADCPRNGLYG (82 aa). 6 disulfide bridges follow: Cys-412–Cys-427, Cys-414–Cys-422, Cys-421–Cys-444, Cys-435–Cys-441, Cys-440–Cys-465, and Cys-453–Cys-472. The Cell attachment site motif lies at 457-459; sequence RGD.

This sequence belongs to the venom metalloproteinase (M12B) family. P-II subfamily. P-IIa sub-subfamily. As to quaternary structure, monomer. Requires Zn(2+) as cofactor. Expressed by the venom gland.

The protein resides in the secreted. Its function is as follows. Impairs hemostasis in the envenomed animal. In terms of biological role, inhibits platelet aggregation. This Protobothrops mucrosquamatus (Taiwan habu) protein is Zinc metalloproteinase/disintegrin PMMP-1.